The following is a 559-amino-acid chain: Potassium-transporting ATPase potassium-binding subunit (559 aa).

12 consecutive transmembrane segments (helical) span residues 5 to 25 (GFLL…PLGV), 63 to 83 (LLAI…MLLG), 132 to 152 (GLTV…FALI), 170 to 190 (LVRI…LLFI), 250 to 270 (LTNM…CFAF), 283 to 303 (LLWA…SAEV), 329 to 349 (VLVS…AVIA), 356 to 376 (ALGG…FGGV), 379 to 399 (GLYG…LMIG), 416 to 436 (MTAL…ALAM), 484 to 504 (LLAF…MAIA), and 524 to 544 (GALF…LTFI).

This sequence belongs to the KdpA family. The system is composed of three essential subunits: KdpA, KdpB and KdpC.

The protein localises to the cell inner membrane. Functionally, part of the high-affinity ATP-driven potassium transport (or Kdp) system, which catalyzes the hydrolysis of ATP coupled with the electrogenic transport of potassium into the cytoplasm. This subunit binds the periplasmic potassium ions and delivers the ions to the membrane domain of KdpB through an intramembrane tunnel. This is Potassium-transporting ATPase potassium-binding subunit from Citrobacter koseri (strain ATCC BAA-895 / CDC 4225-83 / SGSC4696).